Consider the following 224-residue polypeptide: MILCIGDVLSLAELQQILSLIADAEFVDGALTAGWNARLVKNNRQMPKGSLQQRKIEEIILAALERNLLFQMAARPKLIHSILISCYEAGMSYGTHTDDALMLDRHQLMRTDISFTLFLSAPEDYDGGELKIESSEGEQAYKLPAGALILYPASTLHRVEPVTRGIRYAAVSWVQSLIRDPQEREILFDLQTVRQQMFQESGKTRHFDLISKVYANLLRKWAEL.

The Fe2OG dioxygenase domain maps to 78–176 (LIHSILISCY…RYAAVSWVQS (99 aa)). His-96, Asp-98, and His-157 together coordinate Fe cation. Residue Arg-167 coordinates 2-oxoglutarate.

Requires Fe(2+) as cofactor. It depends on L-ascorbate as a cofactor.

The polypeptide is PKHD-type hydroxylase CYB_2270 (Synechococcus sp. (strain JA-2-3B'a(2-13)) (Cyanobacteria bacterium Yellowstone B-Prime)).